Reading from the N-terminus, the 464-residue chain is Soluble pyridine nucleotide transhydrogenase (464 aa).

35–44 serves as a coordination point for FAD; sequence DSRREVGGNC.

Belongs to the class-I pyridine nucleotide-disulfide oxidoreductase family. It depends on FAD as a cofactor.

It localises to the cytoplasm. It carries out the reaction NAD(+) + NADPH = NADH + NADP(+). Conversion of NADPH, generated by peripheral catabolic pathways, to NADH, which can enter the respiratory chain for energy generation. The sequence is that of Soluble pyridine nucleotide transhydrogenase from Pseudomonas syringae pv. tomato (strain ATCC BAA-871 / DC3000).